The chain runs to 203 residues: Holliday junction branch migration complex subunit RuvA (203 aa).

Positions 1-64 (MIGRLRGIII…EDAQLLYGFN (64 aa)) are domain I. The interval 65–142 (NKQERTLFKE…KGLHGDLFTP (78 aa)) is domain II. Positions 143–154 (AADLVLTSPASP) are flexible linker. Residues 155–203 (ATNDAEQEAVAALVALGYKPQEASRMVSKIARPDASSETLIREALRAAL) are domain III.

It belongs to the RuvA family. Homotetramer. Forms an RuvA(8)-RuvB(12)-Holliday junction (HJ) complex. HJ DNA is sandwiched between 2 RuvA tetramers; dsDNA enters through RuvA and exits via RuvB. An RuvB hexamer assembles on each DNA strand where it exits the tetramer. Each RuvB hexamer is contacted by two RuvA subunits (via domain III) on 2 adjacent RuvB subunits; this complex drives branch migration. In the full resolvosome a probable DNA-RuvA(4)-RuvB(12)-RuvC(2) complex forms which resolves the HJ.

It localises to the cytoplasm. Its function is as follows. The RuvA-RuvB-RuvC complex processes Holliday junction (HJ) DNA during genetic recombination and DNA repair, while the RuvA-RuvB complex plays an important role in the rescue of blocked DNA replication forks via replication fork reversal (RFR). RuvA specifically binds to HJ cruciform DNA, conferring on it an open structure. The RuvB hexamer acts as an ATP-dependent pump, pulling dsDNA into and through the RuvAB complex. HJ branch migration allows RuvC to scan DNA until it finds its consensus sequence, where it cleaves and resolves the cruciform DNA. The chain is Holliday junction branch migration complex subunit RuvA from Escherichia coli O9:H4 (strain HS).